Here is a 376-residue protein sequence, read N- to C-terminus: N6-methyladenosine RNA methyltransferase MTA1 (376 aa).

The interval 53–78 is disordered; the sequence is TRRLISSPPPETPFVTPEPKNGPSPL.

This sequence belongs to the MT-A70-like family.

It carries out the reaction an adenosine in mRNA + S-adenosyl-L-methionine = an N(6)-methyladenosine in mRNA + S-adenosyl-L-homocysteine + H(+). N6-methyladenosine RNA methyltransferase that plays a crucial role in fungal phenotypic traits, virulence, and stress tolerance. Mediates the methylation of mRNAs to produce N6-methyladenosine (m6A)-containing mRNAs. M6A is a modification present at internal sites of mRNAs and some non-coding RNAs and plays a role in mRNA stability and processing. Required for appressorium turgor pressure and regulates autophagosome formation during appressorium formation stage. Specifically, mediates the stability of ATG8 mRNA in a m6A-dependent manner via modification of the m6A site A982 located in 3'UTR region. The chain is N6-methyladenosine RNA methyltransferase MTA1 from Pyricularia oryzae (strain 70-15 / ATCC MYA-4617 / FGSC 8958) (Rice blast fungus).